The following is a 144-amino-acid chain: Lysozyme C II (144 aa).

The signal sequence occupies residues 1 to 15; it reads MRAVVVLLLVAVASA. The 129-residue stretch at 16–144 folds into the C-type lysozyme domain; sequence KVYDRCELAR…LRSYVAGCGV (129 aa). 4 cysteine pairs are disulfide-bonded: C21–C142, C45–C130, C79–C95, and C91–C109. Active-site residues include E50 and D67.

The protein localises to the secreted. It carries out the reaction Hydrolysis of (1-&gt;4)-beta-linkages between N-acetylmuramic acid and N-acetyl-D-glucosamine residues in a peptidoglycan and between N-acetyl-D-glucosamine residues in chitodextrins.. Functionally, lysozymes have primarily a bacteriolytic function; those in tissues and body fluids are associated with the monocyte-macrophage system and enhance the activity of immunoagents. Has antibacterial activity against the Gram positive bacterium P.citreus. Has no antibacterial activity against the Gram negative bacteria E.coli and Y.ruckeri. Does not have hemolytic activity against trout erythrocytes. This Oncorhynchus mykiss (Rainbow trout) protein is Lysozyme C II.